The chain runs to 326 residues: uncharacterized protein (326 aa).

Solcar repeat units lie at residues 15–106 (EFLV…VRRV), 114–215 (ETHA…ATDF), and 234–322 (LKTW…SKAL). The next 6 helical transmembrane spans lie at 16-36 (FLVK…SVVA), 83-103 (TATL…YEQV), 120-140 (FLSG…LELI), 191-211 (FSVT…AYDL), 240-260 (LLCG…FEVC), and 294-314 (FFVG…TSFF).

Belongs to the mitochondrial carrier (TC 2.A.29) family.

The protein localises to the mitochondrion inner membrane. This is an uncharacterized protein from Schizosaccharomyces pombe (strain 972 / ATCC 24843) (Fission yeast).